A 106-amino-acid chain; its full sequence is Thioredoxin (106 aa).

One can recognise a Thioredoxin domain in the interval 2 to 106; sequence VNFLKTKADF…GLREKIKKNK (105 aa). Catalysis depends on nucleophile residues cysteine 32 and cysteine 35. An intrachain disulfide couples cysteine 32 to cysteine 35.

The protein belongs to the thioredoxin family.

It localises to the cytoplasm. In terms of biological role, participates in various redox reactions through the reversible oxidation of its active center dithiol to a disulfide and catalyzes dithiol-disulfide exchange reactions. The sequence is that of Thioredoxin (THIO) from Geodia cydonium (Sponge).